The sequence spans 368 residues: tRNA-specific 2-thiouridylase MnmA (368 aa).

ATP-binding positions include 11 to 18 and Met37; that span reads GMSGGVDS. An interaction with target base in tRNA region spans residues 97 to 99; it reads NPD. Cys102 acts as the Nucleophile in catalysis. The cysteines at positions 102 and 199 are disulfide-linked. Gly127 contacts ATP. The interaction with tRNA stretch occupies residues 149 to 151; it reads KDQ. Cys199 acts as the Cysteine persulfide intermediate in catalysis. The tract at residues 311–312 is interaction with tRNA; that stretch reads RY.

Belongs to the MnmA/TRMU family. In terms of assembly, interacts with TusE.

The protein resides in the cytoplasm. The catalysed reaction is S-sulfanyl-L-cysteinyl-[protein] + uridine(34) in tRNA + AH2 + ATP = 2-thiouridine(34) in tRNA + L-cysteinyl-[protein] + A + AMP + diphosphate + H(+). Its function is as follows. Catalyzes the 2-thiolation of uridine at the wobble position (U34) of tRNA(Lys), tRNA(Glu) and tRNA(Gln), leading to the formation of s(2)U34, the first step of tRNA-mnm(5)s(2)U34 synthesis. Sulfur is provided by IscS, via a sulfur-relay system. Binds ATP and its substrate tRNAs. The protein is tRNA-specific 2-thiouridylase MnmA of Escherichia coli O157:H7.